The sequence spans 271 residues: Pyrroline-5-carboxylate reductase (271 aa).

The protein belongs to the pyrroline-5-carboxylate reductase family.

It is found in the cytoplasm. It carries out the reaction L-proline + NADP(+) = (S)-1-pyrroline-5-carboxylate + NADPH + 2 H(+). The catalysed reaction is L-proline + NAD(+) = (S)-1-pyrroline-5-carboxylate + NADH + 2 H(+). Its pathway is amino-acid biosynthesis; L-proline biosynthesis; L-proline from L-glutamate 5-semialdehyde: step 1/1. In terms of biological role, catalyzes the reduction of 1-pyrroline-5-carboxylate (PCA) to L-proline. This Staphylococcus epidermidis (strain ATCC 35984 / DSM 28319 / BCRC 17069 / CCUG 31568 / BM 3577 / RP62A) protein is Pyrroline-5-carboxylate reductase.